We begin with the raw amino-acid sequence, 245 residues long: Acyl-protein thioesterase 1 (245 aa).

Catalysis depends on charge relay system residues Ser-126, Asp-182, and His-214.

This sequence belongs to the AB hydrolase superfamily. AB hydrolase 2 family.

It localises to the cytoplasm. The protein localises to the nucleus. It catalyses the reaction S-hexadecanoyl-L-cysteinyl-[protein] + H2O = L-cysteinyl-[protein] + hexadecanoate + H(+). In terms of biological role, hydrolyzes fatty acids from S-acylated cysteine residues in proteins with a strong preference for palmitoylated G-alpha proteins over other acyl substrates. Mediates the deacylation of G-alpha proteins such as GPA1 in vivo, but has weak or no activity toward palmitoylated Ras proteins. Has weak lysophospholipase activity in vitro; however such activity may not exist in vivo. This Neurospora crassa (strain ATCC 24698 / 74-OR23-1A / CBS 708.71 / DSM 1257 / FGSC 987) protein is Acyl-protein thioesterase 1.